The sequence spans 193 residues: Ion-translocating oxidoreductase complex subunit A (193 aa).

Helical transmembrane passes span 5-25 (LLLL…FLGL), 39-59 (MGMG…AWAV), 62-82 (FILV…LVIA), 102-122 (LLGI…VALL), 134-154 (AVYG…FAAI), and 171-191 (SIAL…SGLV).

Belongs to the NqrDE/RnfAE family. In terms of assembly, the complex is composed of six subunits: RnfA, RnfB, RnfC, RnfD, RnfE and RnfG.

It is found in the cell inner membrane. Part of a membrane-bound complex that couples electron transfer with translocation of ions across the membrane. The chain is Ion-translocating oxidoreductase complex subunit A from Edwardsiella ictaluri (strain 93-146).